A 221-amino-acid polypeptide reads, in one-letter code: MTDNKNRPAAGILGTKLGMTQVFDEKNRVVPVTVIKAGPNVVTQIRTEERDGYSAVQVAFGAIDPRKVNKPVAGQFAKAGVTPRRHIAEIRVADASSFEVGQEINADVFEEGSYVDVTGTSKGKGYAGTMKRHGFRGQGASHGAQAVHRRPGSIGGCATPGRVFKGMRMAGRMGNDRVTTQNLSVHKVDAENGLLLIKGAIPGRKGGVVIVKSAVKGGAHA.

Belongs to the universal ribosomal protein uL3 family. As to quaternary structure, part of the 50S ribosomal subunit. Forms a cluster with proteins L14 and L19.

Its function is as follows. One of the primary rRNA binding proteins, it binds directly near the 3'-end of the 23S rRNA, where it nucleates assembly of the 50S subunit. The polypeptide is Large ribosomal subunit protein uL3 (Nocardia farcinica (strain IFM 10152)).